A 356-amino-acid polypeptide reads, in one-letter code: Protein RecA (356 aa).

ATP is bound at residue Gly-77–Thr-84.

It belongs to the RecA family.

The protein localises to the cytoplasm. Its function is as follows. Can catalyze the hydrolysis of ATP in the presence of single-stranded DNA, the ATP-dependent uptake of single-stranded DNA by duplex DNA, and the ATP-dependent hybridization of homologous single-stranded DNAs. It interacts with LexA causing its activation and leading to its autocatalytic cleavage. This is Protein RecA from Caulobacter sp. (strain K31).